Here is a 124-residue protein sequence, read N- to C-terminus: MPPKDSKQKKDTSKAKKDKDPVNKSGGKAKKKKWSKGKVRDKLNNLVLFDKATYDKLYKEVPNYKLITPAVVSERLKIRGSLARAALLELLSKGMIKLVSKHRAQVIYTRNTKGTDEGAPEKEA.

A compositionally biased stretch (basic and acidic residues) spans 1 to 22; that stretch reads MPPKDSKQKKDTSKAKKDKDPV. The segment at 1 to 37 is disordered; that stretch reads MPPKDSKQKKDTSKAKKDKDPVNKSGGKAKKKKWSKG. The segment covering 27 to 37 has biased composition (basic residues); sequence GKAKKKKWSKG.

It belongs to the eukaryotic ribosomal protein eS25 family. As to quaternary structure, component of the small ribosomal subunit.

The protein resides in the cytoplasm. Its function is as follows. Component of the small ribosomal subunit. The ribosome is a large ribonucleoprotein complex responsible for the synthesis of proteins in the cell. In Ictalurus punctatus (Channel catfish), this protein is Small ribosomal subunit protein eS25 (rps25).